The following is a 322-amino-acid chain: UDP-N-acetylenolpyruvoylglucosamine reductase (322 aa).

The FAD-binding PCMH-type domain occupies 36 to 202; sequence RAGGPAQVLF…TSVLFEGVPG (167 aa). The active site involves Arg-182. Ser-231 (proton donor) is an active-site residue. Glu-301 is an active-site residue.

It belongs to the MurB family. It depends on FAD as a cofactor.

The protein localises to the cytoplasm. The enzyme catalyses UDP-N-acetyl-alpha-D-muramate + NADP(+) = UDP-N-acetyl-3-O-(1-carboxyvinyl)-alpha-D-glucosamine + NADPH + H(+). Its pathway is cell wall biogenesis; peptidoglycan biosynthesis. Functionally, cell wall formation. The polypeptide is UDP-N-acetylenolpyruvoylglucosamine reductase (Brucella canis (strain ATCC 23365 / NCTC 10854 / RM-666)).